The sequence spans 110 residues: Holo-[acyl-carrier-protein] synthase (110 aa).

Residues aspartate 8 and glutamate 54 each coordinate Mg(2+).

It belongs to the P-Pant transferase superfamily. AcpS family. Requires Mg(2+) as cofactor.

The protein resides in the cytoplasm. It catalyses the reaction apo-[ACP] + CoA = holo-[ACP] + adenosine 3',5'-bisphosphate + H(+). Transfers the 4'-phosphopantetheine moiety from coenzyme A to a Ser of acyl-carrier-protein. This is Holo-[acyl-carrier-protein] synthase from Mycoplasma capricolum subsp. capricolum (strain California kid / ATCC 27343 / NCTC 10154).